We begin with the raw amino-acid sequence, 885 residues long: Conidiophore development regulator abaA (885 aa).

Residues 1-20 (MSSLFQPRPVLSSQRYSQSP) are compositionally biased toward polar residues. The segment at 1 to 25 (MSSLFQPRPVLSSQRYSQSPDYVDT) is disordered. A DNA-binding region (TEA) is located at residues 124 to 217 (QKDKGGVWRR…QVVKKFFEDL (94 aa)). Disordered stretches follow at residues 502-539 (KEKR…WTRR) and 817-885 (APGS…TAGW). Basic and acidic residues-rich tracts occupy residues 508-521 (YADG…ERAG) and 831-840 (VESHAGDHHG).

Belongs to the TEC1 family.

The protein resides in the nucleus. Functionally, brlA, abaA and wetA are pivotal regulators of conidiophore development and conidium maturation. They act individually and together to regulate their own expression and that of numerous other sporulation-specific genes. BrlA, abaA and wetA act together to positively regulate the expression of the Pks1 gene cluster that mediates the biosynthesis of an anthraquinone derivative pigment that contributes to conidial pigmentation that provides protection from UV radiation, heat and cold stress. The polypeptide is Conidiophore development regulator abaA (Metarhizium robertsii (strain ARSEF 23 / ATCC MYA-3075) (Metarhizium anisopliae (strain ARSEF 23))).